We begin with the raw amino-acid sequence, 63 residues long: Cypmaclein (63 aa).

The protein belongs to the GASA family. In terms of tissue distribution, expressed in pollen (at protein level).

This Cupressus sempervirens (Italian cypress) protein is Cypmaclein.